The sequence spans 1333 residues: MLDVNVFDELRIGLATADDIRRWSKGEVKKPETINYRTLKPEKDGLFCERIFGPTRDWECACGKYKRVRYKGIICERCGVEVTKSKVRRERMGHIELAAPVTHIWYFKGVPSRLGYLLDLAPKDLDLIIYFGANIITSVDEEARHSDQTTLEAEMLLEKKDVEADAESDIAERAEKLEEDLAELEAAGAKADARRKVQAAADKEMQHIRERAQREIDRLDEVWQTFIKLAPKQMIRDEKLYDELIDRYEDYFTGGMGAESIEALIQNFDLDAEAEELRDIINNGKGQKKMRALKRLKVVAAFQRSGNDPAGMVLNAIPVIPPELRPMVQLDGGRFATSDLNDLYRRVINRNNRLKRMIELGAPEIIVNNEKRMLQESVDALFDNGRRGRPVTGPGNRPLKSLSDLLKGKQGRFRQNLLGKRVDYSGRSVIIVGPQLRLHECGLPKLMALELFKPFVMKRLVENEYAQNIKSAKRMVERQRPEVWDVLEEAISEHPVMLNRAPTLHRLGIQAFEPVLVEGKAIQLHPLACEAFNADFDGDQMAVHLPLSAEAQAEARVLMLASNNILSPASGKPLAMPRLDMVTGLYYLTLEKSSEEFGGQGAYQPADENGPEKGVYSSLAEAIMAYDRGVLGLQAPVRIRLNHLRPPAEVEAEQFPDGWNQGETWLAHTTLGRVMFNEILPWNYPYLEGIMVRKGGGSDKIMLGDVVNDLAAKYPMITVAQTMDKMKDAGFYWSTRSGVTIAMSDVLVLPNKEEMLDRYEESARQIEVKYNRGKLTGRERYDRLVELWKDATDEVGQAVEDLYPDDNPIPMIVKSGAAGNMRQIWTLAGMKGMVVNSKGDYITRPIKTSFREGLTVLEYFNNSHGSRKGLADTALRTADSGYLTRRLVDVAQDVIVRVEDCGTRQGVRVPVAAEVLDATGAVTGYTRHDLIETSVSGRVLAGDATNAAGEVVLAAGTDLTELNIDLLVEAGIKDVKVRSVLTCQTPTGVCAKCYGKSMASGQQVDIGEAVGIVAAQSIGEPGTQLTMRTFHQGGVGGDITGGLPRVQELFEARVPKNCAPIASVEGVIHLEDEGNFYTLTIVPDDGSDNVVYEKLSKRQGLASTRVAMESNAGAFIERTLTEGDRVTVGQRLLRGAADPHDVLEILGRRGVEQHLIDEVQAVYRAQGVAIHDKHIEIIIRQMLRRGTVIESGSTEFLPGSLVDLSEAKLANSEAIGAGGQPAELRSEIMGITKASLATESWLSAASFQETTRVLTDAAINKRSDKLIGLKENVIIGKLIPAGTGISRYRNISIKPTEAARNAAYSIPTYGESIYGDDGFGEFTGASVPLDEAF.

4 residues coordinate Zn(2+): Cys60, Cys62, Cys75, and Cys78. 3 residues coordinate Mg(2+): Asp535, Asp537, and Asp539. Positions 901, 983, 990, and 993 each coordinate Zn(2+).

This sequence belongs to the RNA polymerase beta' chain family. The RNAP catalytic core consists of 2 alpha, 1 beta, 1 beta' and 1 omega subunit. When a sigma factor is associated with the core the holoenzyme is formed, which can initiate transcription. It depends on Mg(2+) as a cofactor. Requires Zn(2+) as cofactor.

It catalyses the reaction RNA(n) + a ribonucleoside 5'-triphosphate = RNA(n+1) + diphosphate. Functionally, DNA-dependent RNA polymerase catalyzes the transcription of DNA into RNA using the four ribonucleoside triphosphates as substrates. In Corynebacterium glutamicum (strain R), this protein is DNA-directed RNA polymerase subunit beta'.